We begin with the raw amino-acid sequence, 189 residues long: ATP synthase subunit delta (189 aa).

This sequence belongs to the ATPase delta chain family. As to quaternary structure, F-type ATPases have 2 components, F(1) - the catalytic core - and F(0) - the membrane proton channel. F(1) has five subunits: alpha(3), beta(3), gamma(1), delta(1), epsilon(1). F(0) has three main subunits: a(1), b(2) and c(10-14). The alpha and beta chains form an alternating ring which encloses part of the gamma chain. F(1) is attached to F(0) by a central stalk formed by the gamma and epsilon chains, while a peripheral stalk is formed by the delta and b chains.

It localises to the cell inner membrane. Functionally, f(1)F(0) ATP synthase produces ATP from ADP in the presence of a proton or sodium gradient. F-type ATPases consist of two structural domains, F(1) containing the extramembraneous catalytic core and F(0) containing the membrane proton channel, linked together by a central stalk and a peripheral stalk. During catalysis, ATP synthesis in the catalytic domain of F(1) is coupled via a rotary mechanism of the central stalk subunits to proton translocation. Its function is as follows. This protein is part of the stalk that links CF(0) to CF(1). It either transmits conformational changes from CF(0) to CF(1) or is implicated in proton conduction. The chain is ATP synthase subunit delta from Ehrlichia ruminantium (strain Gardel).